Here is a 65-residue protein sequence, read N- to C-terminus: Large ribosomal subunit protein bL35 (65 aa).

This sequence belongs to the bacterial ribosomal protein bL35 family.

The sequence is that of Large ribosomal subunit protein bL35 from Caldicellulosiruptor saccharolyticus (strain ATCC 43494 / DSM 8903 / Tp8T 6331).